The sequence spans 94 residues: Large ribosomal subunit protein uL24c (94 aa).

The protein belongs to the universal ribosomal protein uL24 family. In terms of assembly, part of the 50S ribosomal subunit.

It is found in the plastid. It localises to the chloroplast. One of two assembly initiator proteins, it binds directly to the 5'-end of the 23S rRNA, where it nucleates assembly of the 50S subunit. This Cyanidium caldarium (Red alga) protein is Large ribosomal subunit protein uL24c (rpl24).